Here is a 111-residue protein sequence, read N- to C-terminus: Large ribosomal subunit protein uL22 (111 aa).

This sequence belongs to the universal ribosomal protein uL22 family. Part of the 50S ribosomal subunit.

Functionally, this protein binds specifically to 23S rRNA; its binding is stimulated by other ribosomal proteins, e.g. L4, L17, and L20. It is important during the early stages of 50S assembly. It makes multiple contacts with different domains of the 23S rRNA in the assembled 50S subunit and ribosome. In terms of biological role, the globular domain of the protein is located near the polypeptide exit tunnel on the outside of the subunit, while an extended beta-hairpin is found that lines the wall of the exit tunnel in the center of the 70S ribosome. The chain is Large ribosomal subunit protein uL22 from Pelobacter propionicus (strain DSM 2379 / NBRC 103807 / OttBd1).